The sequence spans 316 residues: tRNA-cytidine(32) 2-sulfurtransferase (316 aa).

The tract at residues 1–31 (MGAVIDDSMPGPGADATGTGPSDARTERETR) is disordered. Low complexity predominate over residues 10–21 (PGPGADATGTGP). The PP-loop motif motif lies at 62 to 67 (SGGKDS). [4Fe-4S] cluster contacts are provided by C137, C140, and C228.

The protein belongs to the TtcA family. Homodimer. The cofactor is Mg(2+). [4Fe-4S] cluster is required as a cofactor.

It is found in the cytoplasm. The enzyme catalyses cytidine(32) in tRNA + S-sulfanyl-L-cysteinyl-[cysteine desulfurase] + AH2 + ATP = 2-thiocytidine(32) in tRNA + L-cysteinyl-[cysteine desulfurase] + A + AMP + diphosphate + H(+). Its pathway is tRNA modification. Functionally, catalyzes the ATP-dependent 2-thiolation of cytidine in position 32 of tRNA, to form 2-thiocytidine (s(2)C32). The sulfur atoms are provided by the cysteine/cysteine desulfurase (IscS) system. The sequence is that of tRNA-cytidine(32) 2-sulfurtransferase from Verminephrobacter eiseniae (strain EF01-2).